A 306-amino-acid polypeptide reads, in one-letter code: Lipoyl synthase 2 (306 aa).

The [4Fe-4S] cluster site is built by Cys49, Cys54, Cys60, Cys75, Cys79, Cys82, and Ser300. One can recognise a Radical SAM core domain in the interval 61 to 289 (YAAGTATFLL…AEVACKLGFA (229 aa)).

This sequence belongs to the radical SAM superfamily. Lipoyl synthase family. Requires [4Fe-4S] cluster as cofactor.

The protein localises to the cytoplasm. The enzyme catalyses [[Fe-S] cluster scaffold protein carrying a second [4Fe-4S](2+) cluster] + N(6)-octanoyl-L-lysyl-[protein] + 2 oxidized [2Fe-2S]-[ferredoxin] + 2 S-adenosyl-L-methionine + 4 H(+) = [[Fe-S] cluster scaffold protein] + N(6)-[(R)-dihydrolipoyl]-L-lysyl-[protein] + 4 Fe(3+) + 2 hydrogen sulfide + 2 5'-deoxyadenosine + 2 L-methionine + 2 reduced [2Fe-2S]-[ferredoxin]. Its pathway is protein modification; protein lipoylation via endogenous pathway; protein N(6)-(lipoyl)lysine from octanoyl-[acyl-carrier-protein]: step 2/2. Functionally, catalyzes the radical-mediated insertion of two sulfur atoms into the C-6 and C-8 positions of the octanoyl moiety bound to the lipoyl domains of lipoate-dependent enzymes, thereby converting the octanoylated domains into lipoylated derivatives. The protein is Lipoyl synthase 2 of Prochlorococcus marinus (strain MIT 9313).